A 336-amino-acid chain; its full sequence is Mitochondrial import receptor subunit TOM40 homolog (336 aa).

The tract at residues 1 to 58 (MGNVLAASSPAPPAAGSPPAPGLVSVPPGFTMPPVAGLTPTPDKKETQEDRLPNPGTF) is disordered. Residues 10–21 (PAPPAAGSPPAP) show a composition bias toward pro residues. The segment covering 42 to 52 (PDKKETQEDRL) has biased composition (basic and acidic residues).

The protein belongs to the Tom40 family. In terms of assembly, forms part of the preprotein translocase complex of the outer mitochondrial membrane (TOM complex). Interacts with mitochondrial targeting sequences.

The protein resides in the mitochondrion outer membrane. Functionally, channel-forming protein essential for import of protein precursors into mitochondria. In Xenopus tropicalis (Western clawed frog), this protein is Mitochondrial import receptor subunit TOM40 homolog (tomm40).